A 239-amino-acid chain; its full sequence is Large ribosomal subunit protein uL2 (239 aa).

Disordered regions lie at residues 1-21 and 203-239; these read MGKS…KSPS and PFGG…GRRK. The span at 222–239 shows a compositional bias: basic residues; sequence PPGRKVGHIAARRTGRRK.

Belongs to the universal ribosomal protein uL2 family. As to quaternary structure, part of the 50S ribosomal subunit. Forms a bridge to the 30S subunit in the 70S ribosome.

Its function is as follows. One of the primary rRNA binding proteins. Required for association of the 30S and 50S subunits to form the 70S ribosome, for tRNA binding and peptide bond formation. It has been suggested to have peptidyltransferase activity; this is somewhat controversial. Makes several contacts with the 16S rRNA in the 70S ribosome. The protein is Large ribosomal subunit protein uL2 of Pyrococcus furiosus (strain ATCC 43587 / DSM 3638 / JCM 8422 / Vc1).